The sequence spans 100 residues: NADH-quinone oxidoreductase subunit K (100 aa).

A run of 3 helical transmembrane segments spans residues 2–22 (IGLS…LMGV), 29–49 (LMLF…FAAI), and 63–83 (FFII…LIVL).

This sequence belongs to the complex I subunit 4L family. As to quaternary structure, NDH-1 is composed of 14 different subunits. Subunits NuoA, H, J, K, L, M, N constitute the membrane sector of the complex.

It localises to the cell inner membrane. It catalyses the reaction a quinone + NADH + 5 H(+)(in) = a quinol + NAD(+) + 4 H(+)(out). NDH-1 shuttles electrons from NADH, via FMN and iron-sulfur (Fe-S) centers, to quinones in the respiratory chain. The immediate electron acceptor for the enzyme in this species is believed to be ubiquinone. Couples the redox reaction to proton translocation (for every two electrons transferred, four hydrogen ions are translocated across the cytoplasmic membrane), and thus conserves the redox energy in a proton gradient. The protein is NADH-quinone oxidoreductase subunit K of Sulfurovum sp. (strain NBC37-1).